Consider the following 377-residue polypeptide: Peptidyl-prolyl cis-trans isomerase D (377 aa).

Residues 11–178 (YFDIQIGSQK…TDVTIVDCGE (168 aa)) enclose the PPIase cyclophilin-type domain. 3 TPR repeats span residues 220 to 253 (ASEL…LNEF), 273 to 306 (FTLH…ADAA), and 314 to 347 (AKAY…APGD).

The protein belongs to the cyclophilin-type PPIase family. PPIase D subfamily.

Its subcellular location is the cytoplasm. The enzyme catalyses [protein]-peptidylproline (omega=180) = [protein]-peptidylproline (omega=0). Its function is as follows. PPIases accelerate the folding of proteins. It catalyzes the cis-trans isomerization of proline imidic peptide bonds in oligopeptides. This chain is Peptidyl-prolyl cis-trans isomerase D (cpr6), found in Aspergillus fumigatus (strain ATCC MYA-4609 / CBS 101355 / FGSC A1100 / Af293) (Neosartorya fumigata).